The chain runs to 175 residues: Protein OPG036 (175 aa).

The protein belongs to the poxviridae OPG036 family.

The protein localises to the host nucleus. In terms of biological role, plays a role in the inhibition of host innate immune response. Within the host nucleus, inhibits activation of interferon-beta promoter by inhibiting IRF3 activation. This Homo sapiens (Human) protein is Protein OPG036 (OPG036).